The chain runs to 255 residues: Ribonuclease HII (255 aa).

Positions 72-255 (AIICGIDEVG…KSFEPIKSLL (184 aa)) constitute an RNase H type-2 domain. 3 residues coordinate a divalent metal cation: Asp78, Glu79, and Asp170.

The protein belongs to the RNase HII family. Requires Mn(2+) as cofactor. It depends on Mg(2+) as a cofactor.

It localises to the cytoplasm. It catalyses the reaction Endonucleolytic cleavage to 5'-phosphomonoester.. Functionally, endonuclease that specifically degrades the RNA of RNA-DNA hybrids. The protein is Ribonuclease HII of Staphylococcus aureus (strain MSSA476).